A 307-amino-acid chain; its full sequence is Protoheme IX farnesyltransferase (307 aa).

The next 9 helical transmembrane spans lie at 31–51, 55–75, 103–123, 125–145, 153–173, 179–199, 223–243, 246–266, and 285–305; these read VTQL…PGMV, VLIG…AINC, TLVF…VYAN, LTMW…TILL, IVIG…AVAG, AWFL…ALAL, LLHI…PFVY, SGYI…AYAW, and ILYL…KFVP.

Belongs to the UbiA prenyltransferase family. Protoheme IX farnesyltransferase subfamily.

The protein resides in the cell inner membrane. It catalyses the reaction heme b + (2E,6E)-farnesyl diphosphate + H2O = Fe(II)-heme o + diphosphate. It participates in porphyrin-containing compound metabolism; heme O biosynthesis; heme O from protoheme: step 1/1. In terms of biological role, converts heme B (protoheme IX) to heme O by substitution of the vinyl group on carbon 2 of heme B porphyrin ring with a hydroxyethyl farnesyl side group. This is Protoheme IX farnesyltransferase from Cupriavidus necator (strain ATCC 17699 / DSM 428 / KCTC 22496 / NCIMB 10442 / H16 / Stanier 337) (Ralstonia eutropha).